Here is a 648-residue protein sequence, read N- to C-terminus: Threonine--tRNA ligase (648 aa).

Residues 1–61 (MINITFPDGA…TEDGSIEIVT (61 aa)) enclose the TGS domain. A catalytic region spans residues 242–540 (DHRKLGKELD…LIENYKGAFP (299 aa)). Cys-336, His-387, and His-517 together coordinate Zn(2+).

The protein belongs to the class-II aminoacyl-tRNA synthetase family. As to quaternary structure, homodimer. The cofactor is Zn(2+).

The protein resides in the cytoplasm. The enzyme catalyses tRNA(Thr) + L-threonine + ATP = L-threonyl-tRNA(Thr) + AMP + diphosphate + H(+). Catalyzes the attachment of threonine to tRNA(Thr) in a two-step reaction: L-threonine is first activated by ATP to form Thr-AMP and then transferred to the acceptor end of tRNA(Thr). Also edits incorrectly charged L-seryl-tRNA(Thr). The sequence is that of Threonine--tRNA ligase from Streptococcus thermophilus (strain ATCC BAA-250 / LMG 18311).